The sequence spans 570 residues: Formate--tetrahydrofolate ligase (570 aa).

65–72 provides a ligand contact to ATP; it reads TPYGEGKT.

The protein belongs to the formate--tetrahydrofolate ligase family.

The enzyme catalyses (6S)-5,6,7,8-tetrahydrofolate + formate + ATP = (6R)-10-formyltetrahydrofolate + ADP + phosphate. The protein operates within one-carbon metabolism; tetrahydrofolate interconversion. This is Formate--tetrahydrofolate ligase from Shewanella piezotolerans (strain WP3 / JCM 13877).